The chain runs to 175 residues: MKAQPIRAAIRIIGIDPGLRRTGWGVIESEGNRLIYVGCGSVEPPDDLPLASRLLAIHEGLAKVLADFQPLEAAVEQTFVNKDGVATLKLGQARGIAMLAPAMFGITVAEYAPNQVKKTVVGAGHADKGQIAVMLKILLPKAEPPSADAADALAIAITHAHHRQGQALRMKVAGL.

Catalysis depends on residues D16, E76, and D148. Residues D16, E76, and D148 each contribute to the Mg(2+) site.

Belongs to the RuvC family. In terms of assembly, homodimer which binds Holliday junction (HJ) DNA. The HJ becomes 2-fold symmetrical on binding to RuvC with unstacked arms; it has a different conformation from HJ DNA in complex with RuvA. In the full resolvosome a probable DNA-RuvA(4)-RuvB(12)-RuvC(2) complex forms which resolves the HJ. Mg(2+) serves as cofactor.

It is found in the cytoplasm. It catalyses the reaction Endonucleolytic cleavage at a junction such as a reciprocal single-stranded crossover between two homologous DNA duplexes (Holliday junction).. Functionally, the RuvA-RuvB-RuvC complex processes Holliday junction (HJ) DNA during genetic recombination and DNA repair. Endonuclease that resolves HJ intermediates. Cleaves cruciform DNA by making single-stranded nicks across the HJ at symmetrical positions within the homologous arms, yielding a 5'-phosphate and a 3'-hydroxyl group; requires a central core of homology in the junction. The consensus cleavage sequence is 5'-(A/T)TT(C/G)-3'. Cleavage occurs on the 3'-side of the TT dinucleotide at the point of strand exchange. HJ branch migration catalyzed by RuvA-RuvB allows RuvC to scan DNA until it finds its consensus sequence, where it cleaves and resolves the cruciform DNA. The polypeptide is Crossover junction endodeoxyribonuclease RuvC (Bradyrhizobium sp. (strain ORS 278)).